The following is a 509-amino-acid chain: Cation transporter HKT2;4 (509 aa).

The Cytoplasmic portion of the chain corresponds to 1–32 (MPIRLHIFVSSARHAINSSALICRFIAFHLSP). 2 helical membrane passes run 33–53 (LLIHLSYFLIIDVLGFVALVV) and 96–116 (VLTLLMFLGSEMFLSFLGLVL). Topologically, residues 117 to 164 (ESSKQNKHDPENRRVSSVTVCEQSHLEEAIPQTPSMNSTDIKRSCHKY) are cytoplasmic. 2 helical membrane-spanning segments follow: residues 165 to 185 (LVFVVLAYMIIILVTGSLLVF) and 237 to 257 (GLLLLLIGQILAGSTLLPMFL). Residues 258–296 (RLVIWALRGLRLAKAEEPDFMMNNSSSVGFSHLLPNLQT) are Cytoplasmic-facing. A run of 2 helical transmembrane segments spans residues 297 to 317 (IFLAAVEVAFVGMTVILFCCL) and 353 to 373 (CSLVAPAALVLFMVMMYTPSL). The Cytoplasmic portion of the chain corresponds to 374–400 (TKLFSACQDHKQIGPESDDRTSKGKPF). The next 2 helical transmembrane spans lie at 401–421 (LKTMAFSPLAFNTTVIMLVCI) and 476–496 (SFSGWWSEPGKLILVLAMLYG). The Cytoplasmic portion of the chain corresponds to 497–509 (RLNSKDSTSARTR).

The protein belongs to the TrkH potassium transport family. HKT (TC 2.A.38.3) subfamily. As to expression, expressed in spikelets, leaf blades, leaf sheaths, internodes, nodes, the base of stems and roots.

The protein localises to the cell membrane. The catalysed reaction is K(+)(in) = K(+)(out). It carries out the reaction Mg(2+)(in) = Mg(2+)(out). The enzyme catalyses Ca(2+)(in) = Ca(2+)(out). Its function is as follows. High-affinity potassium transporter that does not show potassium-sodium cotransport. Potassium transport seems to be independent of sodium. Mediates transport of the divalent cations magnesium and calcium in the absence of competing potassium ions. Selectivity for potassium is dominant over divalent cations, and magnesium and calcium transport may be small and may depend on competing potassium concentrations. The protein is Cation transporter HKT2;4 of Oryza sativa subsp. japonica (Rice).